The sequence spans 448 residues: tRNA(Ile)-lysidine synthase (448 aa).

An ATP-binding site is contributed by 25 to 30 (SGGSDS).

The protein belongs to the tRNA(Ile)-lysidine synthase family.

The protein resides in the cytoplasm. The catalysed reaction is cytidine(34) in tRNA(Ile2) + L-lysine + ATP = lysidine(34) in tRNA(Ile2) + AMP + diphosphate + H(+). Functionally, ligates lysine onto the cytidine present at position 34 of the AUA codon-specific tRNA(Ile) that contains the anticodon CAU, in an ATP-dependent manner. Cytidine is converted to lysidine, thus changing the amino acid specificity of the tRNA from methionine to isoleucine. This is tRNA(Ile)-lysidine synthase from Brucella abortus (strain S19).